The sequence spans 431 residues: Probable indole-3-pyruvate monooxygenase YUCCA7 (431 aa).

An FAD-binding site is contributed by 36-41; it reads GAGPSG. 207–212 is a binding site for NADP(+); the sequence is GCGNSG.

This sequence belongs to the FMO family. The cofactor is FAD. In terms of tissue distribution, expressed in shoot apex regions and siliques, and at high levels in roots. Detected in flowers, stems and leaves.

It carries out the reaction indole-3-pyruvate + NADPH + O2 + H(+) = (indol-3-yl)acetate + CO2 + NADP(+) + H2O. It functions in the pathway plant hormone metabolism; auxin biosynthesis. Functionally, involved in auxin biosynthesis. Belongs to the set of redundant YUCCA genes probably responsible for auxin biosynthesis in roots. The protein is Probable indole-3-pyruvate monooxygenase YUCCA7 (YUC7) of Arabidopsis thaliana (Mouse-ear cress).